The sequence spans 238 residues: MQFDPPLQPAILLKRYKRFLADVITPDGRELTLHCPNTGAMTGCAAPGDTVWYSTSDNAKRKYAHTWELTETQQGAVICVNTLRANSLAKEAISSGIIPELSGYNQLKSEVKYGEENSRIDIMLQADDRQNCYIEVKSVTLAEKEYGYFPDAVTTRGQKHLRELMAVAANGDRAVILFAVLHSAIDRFSPAHHIDARYAQLLTEARDKGVEILAWKAELSTTKMTLNKPIAVVLNPGK.

The protein belongs to the SfsA family.

In Klebsiella pneumoniae (strain 342), this protein is Sugar fermentation stimulation protein homolog.